A 592-amino-acid chain; its full sequence is Arginine--tRNA ligase (592 aa).

The short motif at 112 to 122 is the 'HIGH' region element; sequence VNPNKELHVGH.

It belongs to the class-I aminoacyl-tRNA synthetase family. As to quaternary structure, monomer.

The protein resides in the cytoplasm. It carries out the reaction tRNA(Arg) + L-arginine + ATP = L-arginyl-tRNA(Arg) + AMP + diphosphate. The polypeptide is Arginine--tRNA ligase (Thermus thermophilus (strain ATCC BAA-163 / DSM 7039 / HB27)).